The following is a 458-amino-acid chain: Flap endonuclease 1 (458 aa).

The N-domain stretch occupies residues 1-105; the sequence is MGIKGLTGLL…GVLSKRFEKR (105 aa). Residue D34 participates in Mg(2+) binding. The DNA site is built by R47 and R71. Positions 87, 159, 161, 180, and 182 each coordinate Mg(2+). The interval 123–254 is I-domain; sequence DVDRFSRRTV…KSALKLIREF (132 aa). E159 is a DNA binding site. G232 and D234 together coordinate DNA. D234 is a binding site for Mg(2+). Disordered stretches follow at residues 268–347 and 416–458; these read AAAR…IPDE and GFFT…AKKK. Composition is skewed to acidic residues over residues 275 to 285 and 293 to 309; these read AEEEDEEEAEE and EMPDDEDGEKDSDDEEE. Positions 310-329 are enriched in basic and acidic residues; it reads AERRKKAEAAKKKKAQEKAK. The interval 410–418 is interaction with PCNA; the sequence is QQGRLDGFF. The segment covering 442–452 has biased composition (basic and acidic residues); it reads RKGEDKAEGSG.

It belongs to the XPG/RAD2 endonuclease family. FEN1 subfamily. In terms of assembly, interacts with PCNA. Three molecules of FEN1 bind to one PCNA trimer with each molecule binding to one PCNA monomer. PCNA stimulates the nuclease activity without altering cleavage specificity. Mg(2+) is required as a cofactor. Phosphorylated. Phosphorylation upon DNA damage induces relocalization to the nuclear plasma.

The protein localises to the nucleus. It is found in the nucleolus. Its subcellular location is the nucleoplasm. The protein resides in the mitochondrion. In terms of biological role, structure-specific nuclease with 5'-flap endonuclease and 5'-3' exonuclease activities involved in DNA replication and repair. During DNA replication, cleaves the 5'-overhanging flap structure that is generated by displacement synthesis when DNA polymerase encounters the 5'-end of a downstream Okazaki fragment. It enters the flap from the 5'-end and then tracks to cleave the flap base, leaving a nick for ligation. Also involved in the long patch base excision repair (LP-BER) pathway, by cleaving within the apurinic/apyrimidinic (AP) site-terminated flap. Acts as a genome stabilization factor that prevents flaps from equilibrating into structures that lead to duplications and deletions. Also possesses 5'-3' exonuclease activity on nicked or gapped double-stranded DNA, and exhibits RNase H activity. Also involved in replication and repair of rDNA and in repairing mitochondrial DNA. This Coprinopsis cinerea (strain Okayama-7 / 130 / ATCC MYA-4618 / FGSC 9003) (Inky cap fungus) protein is Flap endonuclease 1.